The primary structure comprises 372 residues: DNA replication and repair protein RecF (372 aa).

30-37 (GENAQGKT) provides a ligand contact to ATP.

The protein belongs to the RecF family.

It is found in the cytoplasm. Its function is as follows. The RecF protein is involved in DNA metabolism; it is required for DNA replication and normal SOS inducibility. RecF binds preferentially to single-stranded, linear DNA. It also seems to bind ATP. The sequence is that of DNA replication and repair protein RecF from Shouchella clausii (strain KSM-K16) (Alkalihalobacillus clausii).